Here is a 487-residue protein sequence, read N- to C-terminus: Probable peptidoglycan glycosyltransferase FtsW (487 aa).

9 consecutive transmembrane segments (helical) span residues 30-50 (VSLILLALSLMAIGLVIVTSA), 71-91 (IYIVLAIGAALTVMQIPMQWW), 93-113 (TSNAWLLLLGLVLLIAVLLVG), 122-142 (WLAIGPITIQAAEPAKLFFFC), 167-187 (VVFFAFAVLLLLQPDLGTVVV), 203-223 (LWQFFGLAFTGGAAVTFLIMF), 282-302 (FIMAILAEELGFAGVLTVLAL), 332-352 (IGIWFSFQTAVNVGASAGILP), and 358-378 (FPLLSYGGSSLIIMAAAVGLL). Disordered stretches follow at residues 398–419 (KAKASTSSSRKNKPKTASSAGK) and 444–487 (IDSI…DGYV). The segment covering 401 to 416 (ASTSSSRKNKPKTASS) has biased composition (polar residues). The segment covering 444-453 (IDSIMDDFAQ) has biased composition (acidic residues).

The protein belongs to the SEDS family. FtsW subfamily.

The protein resides in the cell inner membrane. It carries out the reaction [GlcNAc-(1-&gt;4)-Mur2Ac(oyl-L-Ala-gamma-D-Glu-L-Lys-D-Ala-D-Ala)](n)-di-trans,octa-cis-undecaprenyl diphosphate + beta-D-GlcNAc-(1-&gt;4)-Mur2Ac(oyl-L-Ala-gamma-D-Glu-L-Lys-D-Ala-D-Ala)-di-trans,octa-cis-undecaprenyl diphosphate = [GlcNAc-(1-&gt;4)-Mur2Ac(oyl-L-Ala-gamma-D-Glu-L-Lys-D-Ala-D-Ala)](n+1)-di-trans,octa-cis-undecaprenyl diphosphate + di-trans,octa-cis-undecaprenyl diphosphate + H(+). It participates in cell wall biogenesis; peptidoglycan biosynthesis. In terms of biological role, peptidoglycan polymerase that is essential for cell division. The chain is Probable peptidoglycan glycosyltransferase FtsW from Pseudoalteromonas atlantica (strain T6c / ATCC BAA-1087).